The chain runs to 147 residues: D-aminoacyl-tRNA deacylase (147 aa).

The Gly-cisPro motif, important for rejection of L-amino acids motif lies at 136 to 137 (GP).

Belongs to the DTD family. Homodimer.

Its subcellular location is the cytoplasm. The enzyme catalyses glycyl-tRNA(Ala) + H2O = tRNA(Ala) + glycine + H(+). It carries out the reaction a D-aminoacyl-tRNA + H2O = a tRNA + a D-alpha-amino acid + H(+). Its function is as follows. An aminoacyl-tRNA editing enzyme that deacylates mischarged D-aminoacyl-tRNAs. Also deacylates mischarged glycyl-tRNA(Ala), protecting cells against glycine mischarging by AlaRS. Acts via tRNA-based rather than protein-based catalysis; rejects L-amino acids rather than detecting D-amino acids in the active site. By recycling D-aminoacyl-tRNA to D-amino acids and free tRNA molecules, this enzyme counteracts the toxicity associated with the formation of D-aminoacyl-tRNA entities in vivo and helps enforce protein L-homochirality. This is D-aminoacyl-tRNA deacylase from Streptococcus equi subsp. zooepidemicus (strain H70).